We begin with the raw amino-acid sequence, 204 residues long: Phospholipase D (204 aa).

An N-terminal signal peptide occupies residues 1-22 (MKSKNNKFIAMSIPFILGTALG). Residues 142-169 (VPGIAHNKVIIIDKKKVITGSFNFTVAA) form the PLD phosphodiesterase domain. Catalysis depends on residues H147, K149, and D154.

It belongs to the phospholipase D family. Homodimer.

It is found in the secreted. The enzyme catalyses a 1,2-diacyl-sn-glycero-3-phosphocholine + H2O = a 1,2-diacyl-sn-glycero-3-phosphate + choline + H(+). Its function is as follows. Could be a virulence factor. The sequence is that of Phospholipase D (pld) from Rickettsia typhi (strain ATCC VR-144 / Wilmington).